A 250-amino-acid chain; its full sequence is Ribonuclease HII (250 aa).

The 185-residue stretch at 66-250 folds into the RNase H type-2 domain; the sequence is QLVAGVDEVG…SFAPVSEYEK (185 aa). The a divalent metal cation site is built by D72, E73, and D164.

Belongs to the RNase HII family. It depends on Mn(2+) as a cofactor. Mg(2+) is required as a cofactor.

Its subcellular location is the cytoplasm. The enzyme catalyses Endonucleolytic cleavage to 5'-phosphomonoester.. Endonuclease that specifically degrades the RNA of RNA-DNA hybrids. The polypeptide is Ribonuclease HII (Lactobacillus johnsonii (strain CNCM I-12250 / La1 / NCC 533)).